A 150-amino-acid chain; its full sequence is 3-hydroxyacyl-[acyl-carrier-protein] dehydratase FabZ (150 aa).

Residue His53 is part of the active site.

This sequence belongs to the thioester dehydratase family. FabZ subfamily.

It localises to the cytoplasm. It carries out the reaction a (3R)-hydroxyacyl-[ACP] = a (2E)-enoyl-[ACP] + H2O. Functionally, involved in unsaturated fatty acids biosynthesis. Catalyzes the dehydration of short chain beta-hydroxyacyl-ACPs and long chain saturated and unsaturated beta-hydroxyacyl-ACPs. In Photorhabdus laumondii subsp. laumondii (strain DSM 15139 / CIP 105565 / TT01) (Photorhabdus luminescens subsp. laumondii), this protein is 3-hydroxyacyl-[acyl-carrier-protein] dehydratase FabZ.